We begin with the raw amino-acid sequence, 362 residues long: Biotin synthase (362 aa).

Positions 46-273 constitute a Radical SAM core domain; the sequence is NEVQVSTLLS…ASHVRLSAGR (228 aa). [4Fe-4S] cluster is bound by residues C61, C65, and C68. [2Fe-2S] cluster-binding residues include C105, C136, C196, and R268. The tract at residues 320–339 is disordered; sequence PAQRAQKPDQVQEEELLAEV.

The protein belongs to the radical SAM superfamily. Biotin synthase family. Homodimer. [4Fe-4S] cluster serves as cofactor. It depends on [2Fe-2S] cluster as a cofactor.

It carries out the reaction (4R,5S)-dethiobiotin + (sulfur carrier)-SH + 2 reduced [2Fe-2S]-[ferredoxin] + 2 S-adenosyl-L-methionine = (sulfur carrier)-H + biotin + 2 5'-deoxyadenosine + 2 L-methionine + 2 oxidized [2Fe-2S]-[ferredoxin]. The protein operates within cofactor biosynthesis; biotin biosynthesis; biotin from 7,8-diaminononanoate: step 2/2. Catalyzes the conversion of dethiobiotin (DTB) to biotin by the insertion of a sulfur atom into dethiobiotin via a radical-based mechanism. The polypeptide is Biotin synthase (Aeromonas hydrophila subsp. hydrophila (strain ATCC 7966 / DSM 30187 / BCRC 13018 / CCUG 14551 / JCM 1027 / KCTC 2358 / NCIMB 9240 / NCTC 8049)).